The sequence spans 841 residues: 27S pre-rRNA (guanosine(2922)-2'-O)-methyltransferase (841 aa).

Residues Gly58, Trp60, Asp78, Asp94, and Asp119 each contribute to the S-adenosyl-L-methionine site. The Proton acceptor role is filled by Lys159. Residues 360–389 (QEKQRLNVKRERRRKNEMKQKELQRMQMNM) adopt a coiled-coil conformation. A phosphoserine mark is found at Ser455 and Ser464. Disordered regions lie at residues 480-534 (RDAK…DDEA) and 565-654 (NNVE…HSRD). The segment covering 505 to 517 (SLEKKEEEGKDYI) has biased composition (basic and acidic residues). Residues 518–534 (EDNDDEGVEGDSDDDEA) show a composition bias toward acidic residues. Phosphoserine is present on Ser529. Polar residues predominate over residues 574 to 585 (NTVNDGIMSSES). Residues 598–607 (HEEMHQKQDE) show a composition bias toward basic and acidic residues. Composition is skewed to acidic residues over residues 608 to 621 (ADSS…DSDF) and 629 to 641 (ASEE…DSEE). A compositionally biased stretch (basic and acidic residues) spans 642 to 654 (EKNQTKKEKHSRD).

It belongs to the class I-like SAM-binding methyltransferase superfamily. RNA methyltransferase RlmE family. SPB1 subfamily. In terms of assembly, component of the nucleolar and nucleoplasmic pre-60S ribosomal particle. Interacts with the snoRNA-associated proteins NOP1 and NOP58.

It localises to the nucleus. Its subcellular location is the nucleolus. It carries out the reaction guanosine(2922) in 27S pre-rRNA + S-adenosyl-L-methionine = 2'-O-methylguanosine(2922) in 27S pre-rRNA + S-adenosyl-L-homocysteine + H(+). Functionally, required for proper assembly of pre-ribosomal particles during the biogenesis of the 60S ribosomal subunit. Specifically methylates the guanosine in position 2922 of the 25S rRNA at the stage of 27S pre-rRNA maturation. Also methylates the uridine in position 2921 in the absence of methylation of this residue guided by snoRNA snR52 at the stage of 35S pre-rRNA maturation. In Saccharomyces cerevisiae (strain ATCC 204508 / S288c) (Baker's yeast), this protein is 27S pre-rRNA (guanosine(2922)-2'-O)-methyltransferase.